Reading from the N-terminus, the 247-residue chain is 3-deoxy-manno-octulosonate cytidylyltransferase (247 aa).

It belongs to the KdsB family.

It localises to the cytoplasm. The enzyme catalyses 3-deoxy-alpha-D-manno-oct-2-ulosonate + CTP = CMP-3-deoxy-beta-D-manno-octulosonate + diphosphate. It functions in the pathway nucleotide-sugar biosynthesis; CMP-3-deoxy-D-manno-octulosonate biosynthesis; CMP-3-deoxy-D-manno-octulosonate from 3-deoxy-D-manno-octulosonate and CTP: step 1/1. It participates in bacterial outer membrane biogenesis; lipopolysaccharide biosynthesis. Functionally, activates KDO (a required 8-carbon sugar) for incorporation into bacterial lipopolysaccharide in Gram-negative bacteria. The polypeptide is 3-deoxy-manno-octulosonate cytidylyltransferase (Methylobacterium nodulans (strain LMG 21967 / CNCM I-2342 / ORS 2060)).